Here is a 239-residue protein sequence, read N- to C-terminus: Sugar fermentation stimulation protein homolog (239 aa).

Belongs to the SfsA family.

The polypeptide is Sugar fermentation stimulation protein homolog (Microcystis aeruginosa (strain NIES-843 / IAM M-2473)).